A 271-amino-acid polypeptide reads, in one-letter code: Adenosylcobinamide-GDP ribazoletransferase (271 aa).

7 helical membrane passes run 4-24, 35-55, 58-78, 108-128, 135-155, 192-212, and 246-266; these read FLLA…GMSM, YLQT…AYLT, FLPS…ITGL, SLGI…YASI, VLFF…IAEI, FVLG…IGYI, and IIVL…YGGL.

It belongs to the CobS family. Mg(2+) is required as a cofactor.

Its subcellular location is the cell membrane. It catalyses the reaction alpha-ribazole + adenosylcob(III)inamide-GDP = adenosylcob(III)alamin + GMP + H(+). It carries out the reaction alpha-ribazole 5'-phosphate + adenosylcob(III)inamide-GDP = adenosylcob(III)alamin 5'-phosphate + GMP + H(+). Its pathway is cofactor biosynthesis; adenosylcobalamin biosynthesis; adenosylcobalamin from cob(II)yrinate a,c-diamide: step 7/7. Joins adenosylcobinamide-GDP and alpha-ribazole to generate adenosylcobalamin (Ado-cobalamin). Also synthesizes adenosylcobalamin 5'-phosphate from adenosylcobinamide-GDP and alpha-ribazole 5'-phosphate. The chain is Adenosylcobinamide-GDP ribazoletransferase from Methanococcoides burtonii (strain DSM 6242 / NBRC 107633 / OCM 468 / ACE-M).